A 469-amino-acid chain; its full sequence is Glutamate--tRNA ligase (469 aa).

A 'HIGH' region motif is present at residues 11–21; sequence PSPTGFIHLGN. Over residues 118 to 131 the composition is skewed to basic and acidic residues; that stretch reads GEKPRYDGTWRPEP. Residues 118 to 138 are disordered; it reads GEKPRYDGTWRPEPGKVLPEP. Residues 243–247 carry the 'KMSKS' region motif; sequence KMSKR. Residue K246 coordinates ATP.

Belongs to the class-I aminoacyl-tRNA synthetase family. Glutamate--tRNA ligase type 1 subfamily. In terms of assembly, monomer.

It is found in the cytoplasm. It catalyses the reaction tRNA(Glu) + L-glutamate + ATP = L-glutamyl-tRNA(Glu) + AMP + diphosphate. Catalyzes the attachment of glutamate to tRNA(Glu) in a two-step reaction: glutamate is first activated by ATP to form Glu-AMP and then transferred to the acceptor end of tRNA(Glu). This chain is Glutamate--tRNA ligase, found in Burkholderia vietnamiensis (strain G4 / LMG 22486) (Burkholderia cepacia (strain R1808)).